Consider the following 158-residue polypeptide: Endoribonuclease YbeY (158 aa).

Positions 119, 123, and 129 each coordinate Zn(2+).

The protein belongs to the endoribonuclease YbeY family. The cofactor is Zn(2+).

The protein resides in the cytoplasm. Functionally, single strand-specific metallo-endoribonuclease involved in late-stage 70S ribosome quality control and in maturation of the 3' terminus of the 16S rRNA. This chain is Endoribonuclease YbeY, found in Acinetobacter baumannii (strain SDF).